We begin with the raw amino-acid sequence, 201 residues long: Recombination protein RecR (201 aa).

Residues 60-75 (CKRCGSYAETEICEIC) form a C4-type zinc finger. The Toprim domain maps to 83–178 (HTFCVVEQPE…NVTRIAYGIT (96 aa)).

It belongs to the RecR family.

Its function is as follows. May play a role in DNA repair. It seems to be involved in an RecBC-independent recombinational process of DNA repair. It may act with RecF and RecO. This is Recombination protein RecR from Leptospira interrogans serogroup Icterohaemorrhagiae serovar copenhageni (strain Fiocruz L1-130).